The sequence spans 266 residues: Glucosamine-6-phosphate deaminase (266 aa).

D72 functions as the Proton acceptor; for enolization step in the catalytic mechanism. D141 acts as the For ring-opening step in catalysis. The active-site Proton acceptor; for ring-opening step is the H143. E148 (for ring-opening step) is an active-site residue.

Belongs to the glucosamine/galactosamine-6-phosphate isomerase family. NagB subfamily. As to quaternary structure, homohexamer.

It catalyses the reaction alpha-D-glucosamine 6-phosphate + H2O = beta-D-fructose 6-phosphate + NH4(+). It functions in the pathway amino-sugar metabolism; N-acetylneuraminate degradation; D-fructose 6-phosphate from N-acetylneuraminate: step 5/5. With respect to regulation, allosterically activated by N-acetylglucosamine 6-phosphate (GlcNAc6P). In terms of biological role, catalyzes the reversible isomerization-deamination of glucosamine 6-phosphate (GlcN6P) to form fructose 6-phosphate (Fru6P) and ammonium ion. The chain is Glucosamine-6-phosphate deaminase from Pectobacterium atrosepticum (strain SCRI 1043 / ATCC BAA-672) (Erwinia carotovora subsp. atroseptica).